The primary structure comprises 267 residues: Thiamine pyrophosphokinase 3 (267 aa).

The protein belongs to the thiamine pyrophosphokinase family.

It is found in the cytoplasm. The protein resides in the cytosol. It catalyses the reaction thiamine + ATP = thiamine diphosphate + AMP + H(+). It functions in the pathway cofactor biosynthesis; thiamine diphosphate biosynthesis; thiamine diphosphate from thiamine: step 1/1. In terms of biological role, catalyzes the phosphorylation of thiamine to thiamine pyrophosphate (TPP). TPP is an active cofactor for enzymes involved in glycolysis and energy production. Plant leaves require high levels of TPP for photosynthesis and carbohydrate metabolism. The protein is Thiamine pyrophosphokinase 3 (TPK3) of Oryza sativa subsp. japonica (Rice).